Reading from the N-terminus, the 414-residue chain is Tryptophan synthase beta chain (414 aa).

Lys108 carries the N6-(pyridoxal phosphate)lysine modification.

This sequence belongs to the TrpB family. In terms of assembly, tetramer of two alpha and two beta chains. The cofactor is pyridoxal 5'-phosphate.

It catalyses the reaction (1S,2R)-1-C-(indol-3-yl)glycerol 3-phosphate + L-serine = D-glyceraldehyde 3-phosphate + L-tryptophan + H2O. The protein operates within amino-acid biosynthesis; L-tryptophan biosynthesis; L-tryptophan from chorismate: step 5/5. The beta subunit is responsible for the synthesis of L-tryptophan from indole and L-serine. In Beijerinckia indica subsp. indica (strain ATCC 9039 / DSM 1715 / NCIMB 8712), this protein is Tryptophan synthase beta chain.